The following is a 98-amino-acid chain: uncharacterized protein (98 aa).

The segment covering 1-21 has biased composition (low complexity); sequence MTTSPTTISTTTAATTTTTTP. Residues 1 to 26 form a disordered region; sequence MTTSPTTISTTTAATTTTTTPGKGTD. Residues 29-49 traverse the membrane as a helical segment; the sequence is MVYIEAMLFSMLVLILLIIVC.

It localises to the host membrane. This is an uncharacterized protein from Equine herpesvirus 2 (strain 86/87) (EHV-2).